We begin with the raw amino-acid sequence, 233 residues long: 2,3,4,5-tetrahydropyridine-2,6-dicarboxylate N-acetyltransferase (233 aa).

Belongs to the transferase hexapeptide repeat family. DapH subfamily.

It catalyses the reaction (S)-2,3,4,5-tetrahydrodipicolinate + acetyl-CoA + H2O = L-2-acetamido-6-oxoheptanedioate + CoA. Its pathway is amino-acid biosynthesis; L-lysine biosynthesis via DAP pathway; LL-2,6-diaminopimelate from (S)-tetrahydrodipicolinate (acetylase route): step 1/3. Functionally, catalyzes the transfer of an acetyl group from acetyl-CoA to tetrahydrodipicolinate. This Thermotoga petrophila (strain ATCC BAA-488 / DSM 13995 / JCM 10881 / RKU-1) protein is 2,3,4,5-tetrahydropyridine-2,6-dicarboxylate N-acetyltransferase.